The chain runs to 3147 residues: Probable polyketide synthase 1 (3147 aa).

The 446-residue stretch at 12–457 (SSDVAVIGVG…GSNCHLIIQE (446 aa)) folds into the Ketosynthase family 3 (KS3) domain. Active-site for beta-ketoacyl synthase activity residues include Cys180 and His319. A disordered region spans residues 345–369 (QLNNFSTDGNDNDDDDDDNTSPEPL). Positions 354–364 (NDNDDDDDDNT) are enriched in acidic residues. The For beta-ketoacyl synthase activity role is filled by His380. Positions 672-705 (GIYPSISVGHSFGEVSSYYLSGIISLETACKIVY) are acyl/malonyl transferase. The active-site For acyl/malonyl transferase activity is Ser682. The segment at 976 to 1127 (NRLEGPTTSL…ATISLEQQQP (152 aa)) is N-terminal hotdog fold. In terms of domain architecture, PKS/mFAS DH spans 976–1298 (NRLEGPTTSL…IKSTNPKSTK (323 aa)). His1014 functions as the Proton acceptor; for dehydratase activity in the catalytic mechanism. Residues 1149–1298 (DISKLDKFEL…IKSTNPKSTK (150 aa)) are C-terminal hotdog fold. Asp1209 serves as the catalytic Proton donor; for dehydratase activity. Positions 2568 to 2645 (SSNISLQDKI…SFLEKVNGLS (78 aa)) constitute a Carrier domain. At Ser2605 the chain carries O-(pantetheine 4'-phosphoryl)serine. The interval 2723–2747 (PSLSQSDVLKTPPIKSLNNTKNSSL) is disordered. Polar residues predominate over residues 2738–2747 (SLNNTKNSSL). Residues 2789-3147 (VLGIGISVPG…FEGCFLKNVV (359 aa)) are chalcone synthase. The active site involves Cys2930.

This sequence in the C-terminal section; belongs to the thiolase-like superfamily. Chalcone/stilbene synthases family. Homodimer. It depends on pantetheine 4'-phosphate as a cofactor.

It carries out the reaction (E)-4-coumaroyl-CoA + 3 malonyl-CoA + 3 H(+) = 2',4,4',6'-tetrahydroxychalcone + 3 CO2 + 4 CoA. It functions in the pathway secondary metabolite biosynthesis; flavonoid biosynthesis. Probable polyketide synthase. Produces only acylpyrones; in vitro. The polypeptide is Probable polyketide synthase 1 (stlA) (Dictyostelium discoideum (Social amoeba)).